A 381-amino-acid chain; its full sequence is Chaperone protein DnaJ (381 aa).

The 69-residue stretch at Asp-5–Gly-73 folds into the J domain. The CR-type zinc-finger motif lies at Gly-141–Gln-219. Residues Cys-154, Cys-157, Cys-171, Cys-174, Cys-193, Cys-196, Cys-207, and Cys-210 each contribute to the Zn(2+) site. 4 CXXCXGXG motif repeats span residues Cys-154–Gly-161, Cys-171–Gly-178, Cys-193–Gly-200, and Cys-207–Gly-214. The segment at Ser-357 to Ser-381 is disordered.

Belongs to the DnaJ family. In terms of assembly, homodimer. Requires Zn(2+) as cofactor.

It localises to the cytoplasm. Its function is as follows. Participates actively in the response to hyperosmotic and heat shock by preventing the aggregation of stress-denatured proteins and by disaggregating proteins, also in an autonomous, DnaK-independent fashion. Unfolded proteins bind initially to DnaJ; upon interaction with the DnaJ-bound protein, DnaK hydrolyzes its bound ATP, resulting in the formation of a stable complex. GrpE releases ADP from DnaK; ATP binding to DnaK triggers the release of the substrate protein, thus completing the reaction cycle. Several rounds of ATP-dependent interactions between DnaJ, DnaK and GrpE are required for fully efficient folding. Also involved, together with DnaK and GrpE, in the DNA replication of plasmids through activation of initiation proteins. The chain is Chaperone protein DnaJ from Cupriavidus necator (strain ATCC 17699 / DSM 428 / KCTC 22496 / NCIMB 10442 / H16 / Stanier 337) (Ralstonia eutropha).